We begin with the raw amino-acid sequence, 674 residues long: U-box domain-containing protein 16 (674 aa).

The region spanning 273–347 (NIPADFRCPI…VLWCRDQKIP (75 aa)) is the U-box domain. ARM repeat units lie at residues 399–438 (TVAR…NLSI), 441–481 (QNKT…SLAG), and 484–523 (AYRR…NLVA).

The enzyme catalyses S-ubiquitinyl-[E2 ubiquitin-conjugating enzyme]-L-cysteine + [acceptor protein]-L-lysine = [E2 ubiquitin-conjugating enzyme]-L-cysteine + N(6)-ubiquitinyl-[acceptor protein]-L-lysine.. The protein operates within protein modification; protein ubiquitination. Functionally, functions as an E3 ubiquitin ligase. In Arabidopsis thaliana (Mouse-ear cress), this protein is U-box domain-containing protein 16 (PUB16).